We begin with the raw amino-acid sequence, 682 residues long: Potassium-transporting ATPase ATP-binding subunit (682 aa).

4 helical membrane passes run 34-54, 62-82, 219-239, and 254-274; these read PVMF…IAMA, ALFS…ANFA, IALT…TATL, and VLVA…LSAI. Residue D307 is the 4-aspartylphosphate intermediate of the active site. ATP-binding positions include D344, E348, 377–384, and K395; that span reads FTAQSRMS. Positions 518 and 522 each coordinate Mg(2+). Transmembrane regions (helical) follow at residues 588-608, 616-636, and 656-676; these read FAII…LNIM, AILS…PLAL, and IYGL…DLLL.

Belongs to the cation transport ATPase (P-type) (TC 3.A.3) family. Type IA subfamily. As to quaternary structure, the system is composed of three essential subunits: KdpA, KdpB and KdpC.

Its subcellular location is the cell inner membrane. The enzyme catalyses K(+)(out) + ATP + H2O = K(+)(in) + ADP + phosphate + H(+). In terms of biological role, part of the high-affinity ATP-driven potassium transport (or Kdp) system, which catalyzes the hydrolysis of ATP coupled with the electrogenic transport of potassium into the cytoplasm. This subunit is responsible for energy coupling to the transport system and for the release of the potassium ions to the cytoplasm. The chain is Potassium-transporting ATPase ATP-binding subunit from Escherichia coli O17:K52:H18 (strain UMN026 / ExPEC).